The sequence spans 566 residues: Membrane protein insertase YidC (566 aa).

Transmembrane regions (helical) follow at residues 3-23, 346-366, 369-389, 436-456, and 509-529; these read IKRIILYVIVALLAIALFNAW, GWLWPISMLLFWILSAVHAVV, WGWSIIITTILIKIVFYWFSA, GGCLPMLIQVPVFIAFYYVII, and MWILPVIFTVFFINFPAGLVL.

Belongs to the OXA1/ALB3/YidC family. Type 1 subfamily. In terms of assembly, interacts with the Sec translocase complex via SecD. Specifically interacts with transmembrane segments of nascent integral membrane proteins during membrane integration.

The protein localises to the cell inner membrane. Required for the insertion and/or proper folding and/or complex formation of integral membrane proteins into the membrane. Involved in integration of membrane proteins that insert both dependently and independently of the Sec translocase complex, as well as at least some lipoproteins. Aids folding of multispanning membrane proteins. The polypeptide is Membrane protein insertase YidC (Coxiella burnetii (strain RSA 331 / Henzerling II)).